The chain runs to 403 residues: Arginine biosynthesis bifunctional protein ArgJ (403 aa).

Residues 1–11 (MVQSVLSSTSH) show a composition bias toward polar residues. The disordered stretch occupies residues 1–21 (MVQSVLSSTSHGSERADMSAA). Substrate contacts are provided by threonine 161, lysine 183, threonine 194, glutamate 273, asparagine 398, and threonine 403. Threonine 194 functions as the Nucleophile in the catalytic mechanism.

It belongs to the ArgJ family. Heterotetramer of two alpha and two beta chains.

Its subcellular location is the cytoplasm. It carries out the reaction N(2)-acetyl-L-ornithine + L-glutamate = N-acetyl-L-glutamate + L-ornithine. It catalyses the reaction L-glutamate + acetyl-CoA = N-acetyl-L-glutamate + CoA + H(+). It participates in amino-acid biosynthesis; L-arginine biosynthesis; L-ornithine and N-acetyl-L-glutamate from L-glutamate and N(2)-acetyl-L-ornithine (cyclic): step 1/1. It functions in the pathway amino-acid biosynthesis; L-arginine biosynthesis; N(2)-acetyl-L-ornithine from L-glutamate: step 1/4. In terms of biological role, catalyzes two activities which are involved in the cyclic version of arginine biosynthesis: the synthesis of N-acetylglutamate from glutamate and acetyl-CoA as the acetyl donor, and of ornithine by transacetylation between N(2)-acetylornithine and glutamate. In Rhodococcoides fascians (Rhodococcus fascians), this protein is Arginine biosynthesis bifunctional protein ArgJ.